The primary structure comprises 297 residues: tRNA pseudouridine synthase B (297 aa).

Catalysis depends on aspartate 39, which acts as the Nucleophile.

It belongs to the pseudouridine synthase TruB family. Type 1 subfamily.

The enzyme catalyses uridine(55) in tRNA = pseudouridine(55) in tRNA. Responsible for synthesis of pseudouridine from uracil-55 in the psi GC loop of transfer RNAs. The sequence is that of tRNA pseudouridine synthase B from Lactobacillus acidophilus (strain ATCC 700396 / NCK56 / N2 / NCFM).